Reading from the N-terminus, the 156-residue chain is Transcription antitermination protein NusB (156 aa).

This sequence belongs to the NusB family.

Its function is as follows. Involved in transcription antitermination. Required for transcription of ribosomal RNA (rRNA) genes. Binds specifically to the boxA antiterminator sequence of the ribosomal RNA (rrn) operons. This Clostridium kluyveri (strain ATCC 8527 / DSM 555 / NBRC 12016 / NCIMB 10680 / K1) protein is Transcription antitermination protein NusB.